The following is a 517-amino-acid chain: Maturase K (517 aa).

The protein belongs to the intron maturase 2 family. MatK subfamily.

It localises to the plastid. It is found in the chloroplast. In terms of biological role, usually encoded in the trnK tRNA gene intron. Probably assists in splicing its own and other chloroplast group II introns. The chain is Maturase K from Juncus effusus (Soft rush).